Here is a 143-residue protein sequence, read N- to C-terminus: Glutamate-rich protein 4 (143 aa).

A compositionally biased stretch (acidic residues) spans 90-106; that stretch reads LEEEEEDDDEEEQEEEG. Positions 90–143 are disordered; the sequence is LEEEEEDDDEEEQEEEGEGKNCVEENKGLQGKQGEKCSGNPYPAQRLPDFEMTI. Residues 107-116 are compositionally biased toward basic and acidic residues; sequence EGKNCVEENK.

The protein is Glutamate-rich protein 4 (Erich4) of Rattus norvegicus (Rat).